Here is a 56-residue protein sequence, read N- to C-terminus: MAKKNKNILVRLVSTAGTGFFLVKKRNPKTQTEKLSFRKYDPKVRKHVLFKEEKIK.

The protein belongs to the bacterial ribosomal protein bL33 family.

The protein is Large ribosomal subunit protein bL33 of Rickettsia bellii (strain OSU 85-389).